Consider the following 822-residue polypeptide: Probable phosphoketolase (822 aa).

This sequence belongs to the XFP family. Requires thiamine diphosphate as cofactor.

In Lactococcus lactis subsp. lactis (strain IL1403) (Streptococcus lactis), this protein is Probable phosphoketolase.